The following is a 156-amino-acid chain: Ribosomal RNA large subunit methyltransferase H (156 aa).

Residues L73, G104, and 123–128 (IGPLTL) contribute to the S-adenosyl-L-methionine site.

Belongs to the RNA methyltransferase RlmH family. Homodimer.

It is found in the cytoplasm. The enzyme catalyses pseudouridine(1915) in 23S rRNA + S-adenosyl-L-methionine = N(3)-methylpseudouridine(1915) in 23S rRNA + S-adenosyl-L-homocysteine + H(+). Specifically methylates the pseudouridine at position 1915 (m3Psi1915) in 23S rRNA. This is Ribosomal RNA large subunit methyltransferase H from Xanthomonas axonopodis pv. citri (strain 306).